Reading from the N-terminus, the 290-residue chain is Probable branched-chain-amino-acid aminotransferase (290 aa).

The residue at position 155 (Lys-155) is an N6-(pyridoxal phosphate)lysine.

This sequence belongs to the class-IV pyridoxal-phosphate-dependent aminotransferase family. The cofactor is pyridoxal 5'-phosphate.

It catalyses the reaction L-leucine + 2-oxoglutarate = 4-methyl-2-oxopentanoate + L-glutamate. The catalysed reaction is L-isoleucine + 2-oxoglutarate = (S)-3-methyl-2-oxopentanoate + L-glutamate. It carries out the reaction L-valine + 2-oxoglutarate = 3-methyl-2-oxobutanoate + L-glutamate. Its pathway is amino-acid biosynthesis; L-isoleucine biosynthesis; L-isoleucine from 2-oxobutanoate: step 4/4. It functions in the pathway amino-acid biosynthesis; L-leucine biosynthesis; L-leucine from 3-methyl-2-oxobutanoate: step 4/4. The protein operates within amino-acid biosynthesis; L-valine biosynthesis; L-valine from pyruvate: step 4/4. In terms of biological role, acts on leucine, isoleucine and valine. The sequence is that of Probable branched-chain-amino-acid aminotransferase (ilvE) from Rickettsia felis (strain ATCC VR-1525 / URRWXCal2) (Rickettsia azadi).